A 54-amino-acid polypeptide reads, in one-letter code: MDFLRILLFVLACIMALFTSAIAGGCIQRYGKCSTENSNCCAPSECYFSFNQCF.

An N-terminal signal peptide occupies residues 1–23 (MDFLRILLFVLACIMALFTSAIA). Cystine bridges form between C26–C41, C33–C46, and C40–C53.

It belongs to the venom Ptu1-like knottin family. Expressed by the venom gland.

It is found in the secreted. In terms of biological role, binds reversibly and blocks P/Q-type voltage-gated calcium channels (Cav). This Platymeris rhadamanthus (Red spot assassin bug) protein is U-reduvitoxin-Pr7a.